A 515-amino-acid polypeptide reads, in one-letter code: Cytochrome P450 76C3 (515 aa).

A helical transmembrane segment spans residues 5–25 (LIQGMSLPLYFLLTLFFFFFA). Residue cysteine 451 coordinates heme.

This sequence belongs to the cytochrome P450 family. Heme serves as cofactor.

It localises to the membrane. This chain is Cytochrome P450 76C3 (CYP76C3), found in Arabidopsis thaliana (Mouse-ear cress).